Here is a 285-residue protein sequence, read N- to C-terminus: Aldo-keto reductase (285 aa).

An NADP(+)-binding site is contributed by 165–175 (APLAGGILTGK).

The protein belongs to the aldo/keto reductase family. Aldo/keto reductase 2 subfamily.

The protein is Aldo-keto reductase of Babesia bovis.